We begin with the raw amino-acid sequence, 256 residues long: Omega-amidase YafV (256 aa).

Residues 4–234 form the CN hydrolase domain; sequence LKITLLQQPL…ATRIDAELSM (231 aa). Glu42 (proton acceptor) is an active-site residue. Residue Lys107 is part of the active site. Cys141 (nucleophile) is an active-site residue.

This sequence belongs to the carbon-nitrogen hydrolase superfamily. NIT1/NIT2 family.

It carries out the reaction a monoamide of a dicarboxylate + H2O = a dicarboxylate + NH4(+). Hydrolyzes alpha-ketoglutaramate (a-KGM) to alpha-ketoglutarate (alpha-KG) and ammonia (specific activity 6.65 umol/min/mg), has weak activity on L-glutamine, almost no activity on deaminated glutathione (dGSH) and none on glutathione. May function as a metabolite repair enzyme. This chain is Omega-amidase YafV (yafV), found in Escherichia coli (strain B / BL21-DE3).